The sequence spans 325 residues: ATP phosphoribosyltransferase (325 aa).

It belongs to the ATP phosphoribosyltransferase family. Long subfamily. The cofactor is Mg(2+).

It is found in the cytoplasm. The enzyme catalyses 1-(5-phospho-beta-D-ribosyl)-ATP + diphosphate = 5-phospho-alpha-D-ribose 1-diphosphate + ATP. The protein operates within amino-acid biosynthesis; L-histidine biosynthesis; L-histidine from 5-phospho-alpha-D-ribose 1-diphosphate: step 1/9. With respect to regulation, feedback inhibited by histidine. Functionally, catalyzes the condensation of ATP and 5-phosphoribose 1-diphosphate to form N'-(5'-phosphoribosyl)-ATP (PR-ATP). Has a crucial role in the pathway because the rate of histidine biosynthesis seems to be controlled primarily by regulation of HisG enzymatic activity. This is ATP phosphoribosyltransferase from Rhodopseudomonas palustris (strain BisB18).